Here is a 1044-residue protein sequence, read N- to C-terminus: MVEVEEKHYTIVKRNGMFVPFNQDRIFQALEAAFRDTRSLETSSPLPKDLEESIAQITHKVVKEVLAKISEGQVVTVERIQDLVESQLYISGLQDVARDYIVYRDQRKAERGNSSSIIAIIRRDGGSAKFNPMKISAALEKAFRATLQINGMTPPATLSEINDLTLRIVEDVLSLHGEEAINLEEIQDIVEKQLMVAGYYDVAKNYILYREARARARANKDQDGQEEFVPQEETYVVQKEDGTTYLLRKTDLEKRFSWACKRFPKTTDSQLLADMAFMNLYSGIKEDEVTTACIMAARANIEREPDYAFIAAELLTSSLYEETLGCSSQDPNLSEIHKKHFKEYILNGEEYRLNPQLKDYDLDALSEVLDLSRDQQFSYMGVQNLYDRYFNLHEGRRLETAQIFWMRVSMGLALNEGEQKNFWAITFYNLLSTFRYTPATPTLFNSGMRHSQLSSCYLSTVKDDLSHIYKVISDNALLSKWAGGIGNDWTDVRATGAVIKGTNGKSQGVIPFIKVANDTAIAVNQGGKRKGAMCVYLENWHLDYEDFLELRKNTGDERRRTHDINTASWIPDLFFKRLEKKGMWTLFSPDDVPGLHEAYGLEFEKLYEEYERKVESGEIRLYKKVEAEVLWRKMLSMLYETGHPWITFKDPSNIRSNQDHVGVVRCSNLCTEILLNCSESETAVCNLGSINLVEHIRNDKLDEEKLKETISIAIRILDNVIDLNFYPTPEAKQANLTHRAVGLGVMGFQDVLYELNISYASQEAVEFSDECSEIIAYYAILASSLLAKERGTYASYSGSKWDRGYLPLDTIELLKETRGEHNVLVDTSSKKDWTPVRDTIQKYGMRNSQVMAIAPTATISNIIGVTQSIEPMYKHLFVKSNLSGEFTIPNTYLIKKLKELGLWDAEMLDDLKYFDGSLLEIERIPNHLKKLFLTAFEIEPEWIIECTSRRQKWIDMGVSLNLYLAEPDGKKLSNMYLTAWKKGLKTTYYLRSQAATSVEKSFIDINKRGIQPRWMKNKSASTSIVVERKTTPVCSMEEGCESCQ.

3 ATP-cone domains span residues 9-111 (YTIV…KAER), 118-217 (IAII…ARAR), and 235-325 (YVVQ…ETLG). Substrate-binding positions include threonine 440, 455–456 (SC), glycine 484, 668–672 (NLCTE), and 855–859 (PTATI). A disulfide bridge connects residues cysteine 456 and cysteine 685. The active-site Proton acceptor is the asparagine 668. Catalysis depends on cysteine 670, which acts as the Cysteine radical intermediate. Glutamate 672 acts as the Proton acceptor in catalysis.

The protein belongs to the ribonucleoside diphosphate reductase large chain family. As to quaternary structure, tetramer of two alpha and two beta subunits.

It carries out the reaction a 2'-deoxyribonucleoside 5'-diphosphate + [thioredoxin]-disulfide + H2O = a ribonucleoside 5'-diphosphate + [thioredoxin]-dithiol. Its activity is regulated as follows. Under complex allosteric control mediated by deoxynucleoside triphosphates and ATP binding. The type of nucleotide bound at the specificity site determines substrate preference. It seems probable that ATP makes the enzyme reduce CDP and UDP, dGTP favors ADP reduction and dTTP favors GDP reduction. Provides the precursors necessary for DNA synthesis. Catalyzes the biosynthesis of deoxyribonucleotides from the corresponding ribonucleotides. The sequence is that of Ribonucleoside-diphosphate reductase subunit alpha (nrdA) from Chlamydia pneumoniae (Chlamydophila pneumoniae).